The chain runs to 423 residues: Gamma-glutamyl phosphate reductase (423 aa).

The protein belongs to the gamma-glutamyl phosphate reductase family.

The protein localises to the cytoplasm. It carries out the reaction L-glutamate 5-semialdehyde + phosphate + NADP(+) = L-glutamyl 5-phosphate + NADPH + H(+). It participates in amino-acid biosynthesis; L-proline biosynthesis; L-glutamate 5-semialdehyde from L-glutamate: step 2/2. In terms of biological role, catalyzes the NADPH-dependent reduction of L-glutamate 5-phosphate into L-glutamate 5-semialdehyde and phosphate. The product spontaneously undergoes cyclization to form 1-pyrroline-5-carboxylate. The protein is Gamma-glutamyl phosphate reductase of Pseudomonas putida (strain GB-1).